The primary structure comprises 201 residues: Recombination protein RecR (201 aa).

Residues 59-74 (CSRCQNFCEAELCSIC) form a C4-type zinc finger. The Toprim domain occupies 82 to 177 (RVLCVVESPT…PVSRIAHGIP (96 aa)).

The protein belongs to the RecR family.

Functionally, may play a role in DNA repair. It seems to be involved in an RecBC-independent recombinational process of DNA repair. It may act with RecF and RecO. This chain is Recombination protein RecR, found in Hahella chejuensis (strain KCTC 2396).